The chain runs to 297 residues: 4-hydroxy-tetrahydrodipicolinate synthase (297 aa).

Position 49 (T49) interacts with pyruvate. Y137 functions as the Proton donor/acceptor in the catalytic mechanism. K165 functions as the Schiff-base intermediate with substrate in the catalytic mechanism. I208 serves as a coordination point for pyruvate.

It belongs to the DapA family. In terms of assembly, homotetramer; dimer of dimers.

It is found in the cytoplasm. The enzyme catalyses L-aspartate 4-semialdehyde + pyruvate = (2S,4S)-4-hydroxy-2,3,4,5-tetrahydrodipicolinate + H2O + H(+). The protein operates within amino-acid biosynthesis; L-lysine biosynthesis via DAP pathway; (S)-tetrahydrodipicolinate from L-aspartate: step 3/4. Its function is as follows. Catalyzes the condensation of (S)-aspartate-beta-semialdehyde [(S)-ASA] and pyruvate to 4-hydroxy-tetrahydrodipicolinate (HTPA). This chain is 4-hydroxy-tetrahydrodipicolinate synthase, found in Gluconacetobacter diazotrophicus (strain ATCC 49037 / DSM 5601 / CCUG 37298 / CIP 103539 / LMG 7603 / PAl5).